Consider the following 492-residue polypeptide: Amphoterin-induced protein 1 (492 aa).

The signal sequence occupies residues 1 to 27 (MQPQRDLRGLWLLLLSVFLLLFEVARA). Residues 28-61 (GRSVVSCPANCLCASNILSCSKQQLPNVPQSLPS) enclose the LRRNT domain. The Extracellular portion of the chain corresponds to 28–371 (GRSVVSCPAN…LHGHHDTLNT (344 aa)). 2 disulfides stabilise this stretch: Cys-34-Cys-40 and Cys-38-Cys-47. 6 LRR repeats span residues 62–83 (YTALLDLSHNNLSRLRAEWTPT), 87–108 (NLHSLLLSHNHLNFISSEAFVP), 111–132 (NLRYLDLSSNHLHTLDEFLFSD), 135–156 (ALEVLLLYNNHIVVVDRNAFED), 159–180 (QLQKLYLSQNQISRFPVELIKD), and 186–206 (KLMLLDLSSNKLKKLPLTDLQ). N-linked (GlcNAc...) asparagine glycosylation occurs at Asn-72. Residues 208-272 (LPAWVKNGLY…FSLDFFNCSE (65 aa)) form the LRRCT domain. 3 disulfide bridges follow: Cys-225–Cys-253, Cys-227–Cys-270, and Cys-290–Cys-340. Asn-269, Asn-315, Asn-348, and Asn-359 each carry an N-linked (GlcNAc...) asparagine glycan. One can recognise an Ig-like C2-type domain in the interval 269–352 (NCSEYKESAW…MGETFNETLS (84 aa)). Residues 372 to 392 (AYTTLVGCILSVVLVLIYLYL) traverse the membrane as a helical segment. Residues 393–492 (TPCRCWCRGV…SVFSDTPIVV (100 aa)) are Cytoplasmic-facing. Residues 404–492 (KPSSHQGDSL…SVFSDTPIVV (89 aa)) are disordered. Residues 407-423 (SHQGDSLSSSMLSTTPN) are compositionally biased toward polar residues. Residues 430-441 (GDKDDGFDRRVA) are compositionally biased toward basic and acidic residues. Phosphoserine occurs at positions 476 and 480.

Belongs to the immunoglobulin superfamily. AMIGO family. Homodimer, and heterodimer with AMIGO2 and AMIGO3. Interacts with KCNB1. As to expression, expressed in hippocampal and cortical neurons (at protein level). High levels in cerebellum, cerebrum, and retina. Low levels in liver, kidney, small intestine, spleen, lung and heart.

It localises to the cell membrane. The protein localises to the perikaryon. The protein resides in the cell projection. It is found in the dendrite. Functionally, promotes growth and fasciculation of neurites from cultured hippocampal neurons. May be involved in fasciculation as well as myelination of developing neural axons. May have a role in regeneration as well as neural plasticity in the adult nervous system. May mediate homophilic as well as heterophilic cell-cell interaction and contribute to signal transduction through its intracellular domain. Assembled with KCNB1 modulates the gating characteristics of the delayed rectifier voltage-dependent potassium channel KCNB1. This is Amphoterin-induced protein 1 from Mus musculus (Mouse).